The sequence spans 311 residues: tRNA-cytidine(32) 2-sulfurtransferase (311 aa).

The short motif at 45-50 (SGGKDS) is the PP-loop motif element. [4Fe-4S] cluster is bound by residues C120, C123, and C211.

It belongs to the TtcA family. Homodimer. Mg(2+) serves as cofactor. [4Fe-4S] cluster is required as a cofactor.

The protein resides in the cytoplasm. The enzyme catalyses cytidine(32) in tRNA + S-sulfanyl-L-cysteinyl-[cysteine desulfurase] + AH2 + ATP = 2-thiocytidine(32) in tRNA + L-cysteinyl-[cysteine desulfurase] + A + AMP + diphosphate + H(+). It functions in the pathway tRNA modification. Catalyzes the ATP-dependent 2-thiolation of cytidine in position 32 of tRNA, to form 2-thiocytidine (s(2)C32). The sulfur atoms are provided by the cysteine/cysteine desulfurase (IscS) system. In Shewanella halifaxensis (strain HAW-EB4), this protein is tRNA-cytidine(32) 2-sulfurtransferase.